A 1430-amino-acid chain; its full sequence is ABC transporter eupT (1430 aa).

The tract at residues 1–26 (MAPAIDSTVNDLQPNTPNPEKALSSQ) is disordered. The ABC transporter 1 domain occupies 112–368 (LALPAMIRQL…FVNLGFECPA (257 aa)). A glycan (N-linked (GlcNAc...) asparagine) is linked at asparagine 292. 5 consecutive transmembrane segments (helical) span residues 476–496 (WPAV…SSLF), 511–531 (VVLF…VMTL), 557–577 (VLVD…VFYF), 586–606 (GNFF…SGVF), and 620–640 (MVPA…VVPV). Asparagine 684 is a glycosylation site (N-linked (GlcNAc...) asparagine). A helical membrane pass occupies residues 707–727 (VGIIIAMVIFNYLMYFIASEY). The ABC transporter 2 domain occupies 789-1032 (FHWNNVCYDL…TLIDYFERNG (244 aa)). 825-832 (GVSGAGKT) provides a ligand contact to ATP. N-linked (GlcNAc...) asparagine glycosylation is present at asparagine 1019. 6 consecutive transmembrane segments (helical) span residues 1133-1153 (ITLC…APLS), 1213-1233 (LPWS…PIGF), 1249-1269 (LMWL…HMCI), 1278-1298 (GGNI…VLAS), 1305-1325 (FWIF…VLST), and 1400-1420 (FGIL…LYWI).

The protein belongs to the ABC transporter superfamily. ABCG family. PDR (TC 3.A.1.205) subfamily.

The protein localises to the cell membrane. ABC transporter; part of the gene cluster that mediates the biosynthesis of eupenifeldin, a bistropolone meroterpenoid that acts as an antitumor agent. This is ABC transporter eupT from Phoma sp.